The following is a 106-amino-acid chain: MNDSQYNLIAEALLLAIEEAIEDSGVDIDYEGVGGLLTLTFKNNSKVIINKQAPLHEIWVATKFNGHHFVLNNDSWTDKRSGEEFWQFLSNAVSTQAETELTLSAQ.

Belongs to the frataxin family.

Functionally, involved in iron-sulfur (Fe-S) cluster assembly. May act as a regulator of Fe-S biogenesis. The chain is Iron-sulfur cluster assembly protein CyaY from Colwellia psychrerythraea (strain 34H / ATCC BAA-681) (Vibrio psychroerythus).